The primary structure comprises 368 residues: Putative phospho-2-dehydro-3-deoxyheptonate aldolase (368 aa).

It belongs to the class-I DAHP synthase family.

It carries out the reaction D-erythrose 4-phosphate + phosphoenolpyruvate + H2O = 7-phospho-2-dehydro-3-deoxy-D-arabino-heptonate + phosphate. It participates in metabolic intermediate biosynthesis; chorismate biosynthesis; chorismate from D-erythrose 4-phosphate and phosphoenolpyruvate: step 1/7. Stereospecific condensation of phosphoenolpyruvate (PEP) and D-erythrose-4-phosphate (E4P) giving rise to 3-deoxy-D-arabino-heptulosonate-7-phosphate (DAHP). This chain is Putative phospho-2-dehydro-3-deoxyheptonate aldolase, found in Schizosaccharomyces pombe (strain 972 / ATCC 24843) (Fission yeast).